A 264-amino-acid polypeptide reads, in one-letter code: 5'-nucleotidase SurE (264 aa).

4 residues coordinate a divalent metal cation: Asp10, Asp11, Ser43, and Asn97.

The protein belongs to the SurE nucleotidase family. It depends on a divalent metal cation as a cofactor.

The protein resides in the cytoplasm. It catalyses the reaction a ribonucleoside 5'-phosphate + H2O = a ribonucleoside + phosphate. Its function is as follows. Nucleotidase that shows phosphatase activity on nucleoside 5'-monophosphates. The polypeptide is 5'-nucleotidase SurE (Sulfurimonas denitrificans (strain ATCC 33889 / DSM 1251) (Thiomicrospira denitrificans (strain ATCC 33889 / DSM 1251))).